Consider the following 79-residue polypeptide: Small ribosomal subunit protein uS17 (79 aa).

Belongs to the universal ribosomal protein uS17 family. In terms of assembly, part of the 30S ribosomal subunit.

In terms of biological role, one of the primary rRNA binding proteins, it binds specifically to the 5'-end of 16S ribosomal RNA. The protein is Small ribosomal subunit protein uS17 of Rhizobium leguminosarum bv. trifolii (strain WSM2304).